A 499-amino-acid chain; its full sequence is U4/U6 small nuclear ribonucleoprotein Prp31 (499 aa).

The disordered stretch occupies residues 1–43 (MSLADELLADLEEAAEEEEGGSYGEEEEEPAIEDVQEETQLDL). Residues 7–40 (LLADLEEAAEEEEGGSYGEEEEEPAIEDVQEETQ) are compositionally biased toward acidic residues. Coiled-coil stretches lie at residues 85–120 (EAAP…KYSK) and 181–215 (DEEL…MSFI). Residues 215 to 333 (IAPNLSIIIG…IERKFDKWQE (119 aa)) enclose the Nop domain. The segment at 334-357 (PPPVKQVKPLPAPLDGQRKKRGGR) is disordered. Positions 351 to 364 (RKKRGGRRYRKMKE) match the Nuclear localization signal (NLS) motif. Phosphoserine is present on residues Ser-379, Ser-395, and Ser-432. Lys-438 is subject to N6-acetyllysine. A Phosphoserine modification is found at Ser-439. A Phosphothreonine modification is found at Thr-440. Ser-450 carries the phosphoserine modification. Phosphothreonine is present on Thr-455. Residues Lys-471 and Lys-478 each participate in a glycyl lysine isopeptide (Lys-Gly) (interchain with G-Cter in SUMO2) cross-link.

The protein belongs to the PRP31 family. As to quaternary structure, identified in the spliceosome B complex. Component of the U4/U6-U5 tri-snRNP complex composed of the U4, U6 and U5 snRNAs and at least PRPF3, PRPF4, PRPF6, PRPF8, PRPF31, SNRNP200, TXNL4A, SNRNP40, DDX23, CD2BP2, PPIH, SNU13, EFTUD2, SART1 and USP39. Interacts with a complex formed by SNU13 and U4 snRNA, but not with SNU13 or U4 snRNA alone. The complex formed by SNU13 and PRPF31 also binds U4atac snRNA, a characteristic component of specific, less abundant spliceosomal complexes. Interacts with PRPF6/U5 snRNP-associated 102 kDa protein. Component of some MLL1/MLL complex, at least composed of the core components KMT2A/MLL1, ASH2L, HCFC1/HCF1, WDR5 and RBBP5, as well as the facultative components BACC1, CHD8, E2F6, HSP70, INO80C, KANSL1, LAS1L, MAX, MCRS1, MGA, KAT8/MOF, PELP1, PHF20, PRP31, RING2, RUVB1/TIP49A, RUVB2/TIP49B, SENP3, TAF1, TAF4, TAF6, TAF7, TAF9 and TEX10. Interacts (via its NLS) with CTNNBL1. Interacts with USH1G. Phosphorylated by PRP4K during spliceosome assembly.

The protein localises to the nucleus. The protein resides in the nucleus speckle. It localises to the cajal body. Its function is as follows. Involved in pre-mRNA splicing as component of the spliceosome. Required for the assembly of the U4/U5/U6 tri-snRNP complex, one of the building blocks of the spliceosome. The protein is U4/U6 small nuclear ribonucleoprotein Prp31 (Prpf31) of Mus musculus (Mouse).